The chain runs to 145 residues: Transcription antitermination protein NusB (145 aa).

This sequence belongs to the NusB family.

In terms of biological role, involved in transcription antitermination. Required for transcription of ribosomal RNA (rRNA) genes. Binds specifically to the boxA antiterminator sequence of the ribosomal RNA (rrn) operons. The protein is Transcription antitermination protein NusB of Psychromonas ingrahamii (strain DSM 17664 / CCUG 51855 / 37).